Reading from the N-terminus, the 240-residue chain is Putative F-box/kelch-repeat protein At2g29860 (240 aa).

The tract at residues 1–20 (MVLLSEIPGGSNGDDPNMNP) is disordered. One can recognise an F-box domain in the interval 17–63 (NMNPQELPEELIESIVAPIPRCYYPSLSLLSRAFRHVITSQQLFVTR). 2 Kelch repeats span residues 120–165 (KIYV…VIDG) and 167–212 (IYVI…VTYA).

This is Putative F-box/kelch-repeat protein At2g29860 from Arabidopsis thaliana (Mouse-ear cress).